Consider the following 494-residue polypeptide: Cytochrome P450 2C44 (494 aa).

An N-terminal signal peptide occupies residues 1–25 (MELLGLPTLALLVLVMSLSLLSVWT). A Phosphoserine modification is found at serine 131. Lysine 253 and lysine 379 each carry N6-acetyllysine. Residue cysteine 439 coordinates heme.

This sequence belongs to the cytochrome P450 family. The cofactor is heme. Highly expressed in liver, particularly in hepatocytes and bile duct epithelial cells (at protein level). Expressed in nephron segments. Prominent expression is detected in proximal tubules at the corticomedullary junction (at protein level). Also expressed in renal cortical collecting duct. Lower expression levels are detected in adrenal glands.

The protein localises to the endoplasmic reticulum membrane. It localises to the microsome membrane. The catalysed reaction is (5Z,8Z,11Z,14Z)-eicosatetraenoate + reduced [NADPH--hemoprotein reductase] + O2 = (8R,9S)-epoxy-(5Z,11Z,14Z)-eicosatrienoate + oxidized [NADPH--hemoprotein reductase] + H2O + H(+). The enzyme catalyses (5Z,8Z,11Z,14Z)-eicosatetraenoate + reduced [NADPH--hemoprotein reductase] + O2 = (11R,12S)-epoxy-(5Z,8Z,14Z)-eicosatrienoate + oxidized [NADPH--hemoprotein reductase] + H2O + H(+). It catalyses the reaction (5Z,8Z,11Z,14Z)-eicosatetraenoate + reduced [NADPH--hemoprotein reductase] + O2 = 14,15-epoxy-(5Z,8Z,11Z)-eicosatrienoate + oxidized [NADPH--hemoprotein reductase] + H2O + H(+). It carries out the reaction (5Z,8Z,11Z,14Z,17Z)-eicosapentaenoate + reduced [NADPH--hemoprotein reductase] + O2 = 8,9-epoxy-(5Z,11Z,14Z,17Z)-eicosatetraenoate + oxidized [NADPH--hemoprotein reductase] + H2O + H(+). The catalysed reaction is (5Z,8Z,11Z,14Z,17Z)-eicosapentaenoate + reduced [NADPH--hemoprotein reductase] + O2 = 11,12-epoxy-(5Z,8Z,14Z,17Z)-eicosatetraenoate + oxidized [NADPH--hemoprotein reductase] + H2O + H(+). The enzyme catalyses (5Z,8Z,11Z,14Z,17Z)-eicosapentaenoate + reduced [NADPH--hemoprotein reductase] + O2 = 14,15-epoxy-(5Z,8Z,11Z,17Z)-eicosatetraenoate + oxidized [NADPH--hemoprotein reductase] + H2O + H(+). It catalyses the reaction (5Z,8Z,11Z,14Z,17Z)-eicosapentaenoate + reduced [NADPH--hemoprotein reductase] + O2 = (17R,18S)-epoxy-(5Z,8Z,11Z,14Z)-eicosatetraenoate + oxidized [NADPH--hemoprotein reductase] + H2O + H(+). It carries out the reaction (5Z,8Z,11Z,14Z,17Z)-eicosapentaenoate + reduced [NADPH--hemoprotein reductase] + O2 = (17S,18R)-epoxy-(5Z,8Z,11Z,14Z)-eicosatetraenoate + oxidized [NADPH--hemoprotein reductase] + H2O + H(+). The catalysed reaction is 20-hydroxy-(5Z,8Z,11Z,14Z)-eicosatetraenoate + reduced [NADPH--hemoprotein reductase] + O2 = 20-hydroxy-8,9-epoxy-(5Z,11Z,14Z)-eicosatrienoate + oxidized [NADPH--hemoprotein reductase] + H2O + H(+). Its pathway is lipid metabolism; arachidonate metabolism. Its function is as follows. A cytochrome P450 monooxygenase involved in polyunsaturated fatty acids (PUFAs) metabolism and signaling. Catalyzes preferentially the epoxidation of double bonds of PUFAs. Converts arachidonic acid (ARA, C20:4(n-6)) primarily to stereospecific products 8R,9S-epoxyeicosatrienoate (EET) and 11R,12S-EET. Plays a major role in the formation of EETs and hydroxy-EETs (HEETs) in kidney. Via EETs may inhibit the epithelial sodium channels (ENaCs) in nephron segments, preventing excessive sodium absorption during high dietary salt intake. Participates in the formation of anti-inflammatory hydroxyepoxyeicosatrienoic acids (HEETs) by converting 20-hydroxyeicosatetraenoic acid (20-HETE) to 20,8,9-HEET, an activator of PPARA. Metabolizes eicosapentaenoic acid (EPA, C20:5(n-3)) to epoxyeicosatetraenoic acid (EETeTr) regioisomers, 8,9-, 11,12-, 14,15-, and 17,18- EETeTr, preferentially producing 17R,18S enantiomer. Mechanistically, uses molecular oxygen inserting one oxygen atom into a substrate, and reducing the second into a water molecule, with two electrons provided by NADPH via cytochrome P450 reductase (CPR; NADPH-ferrihemoprotein reductase). The polypeptide is Cytochrome P450 2C44 (Mus musculus (Mouse)).